We begin with the raw amino-acid sequence, 765 residues long: Phosphoribosylformylglycinamidine synthase subunit PurL (765 aa).

His-57 is an active-site residue. Residues Tyr-60 and Arg-104 each coordinate ATP. Glu-106 contributes to the Mg(2+) binding site. Substrate-binding positions include 107–110 (SHNH) and Arg-129. Residue His-108 is the Proton acceptor of the active site. Position 130 (Asp-130) interacts with Mg(2+). Gln-254 provides a ligand contact to substrate. Mg(2+) is bound at residue Asp-282. 326 to 328 (ESQ) contacts substrate. Positions 508 and 545 each coordinate ATP. Asn-546 provides a ligand contact to Mg(2+). Residue Ser-548 coordinates substrate.

It belongs to the FGAMS family. As to quaternary structure, monomer. Part of the FGAM synthase complex composed of 1 PurL, 1 PurQ and 2 PurS subunits.

The protein localises to the cytoplasm. The enzyme catalyses N(2)-formyl-N(1)-(5-phospho-beta-D-ribosyl)glycinamide + L-glutamine + ATP + H2O = 2-formamido-N(1)-(5-O-phospho-beta-D-ribosyl)acetamidine + L-glutamate + ADP + phosphate + H(+). Its pathway is purine metabolism; IMP biosynthesis via de novo pathway; 5-amino-1-(5-phospho-D-ribosyl)imidazole from N(2)-formyl-N(1)-(5-phospho-D-ribosyl)glycinamide: step 1/2. Functionally, part of the phosphoribosylformylglycinamidine synthase complex involved in the purines biosynthetic pathway. Catalyzes the ATP-dependent conversion of formylglycinamide ribonucleotide (FGAR) and glutamine to yield formylglycinamidine ribonucleotide (FGAM) and glutamate. The FGAM synthase complex is composed of three subunits. PurQ produces an ammonia molecule by converting glutamine to glutamate. PurL transfers the ammonia molecule to FGAR to form FGAM in an ATP-dependent manner. PurS interacts with PurQ and PurL and is thought to assist in the transfer of the ammonia molecule from PurQ to PurL. This is Phosphoribosylformylglycinamidine synthase subunit PurL from Corynebacterium aurimucosum (strain ATCC 700975 / DSM 44827 / CIP 107346 / CN-1) (Corynebacterium nigricans).